A 153-amino-acid polypeptide reads, in one-letter code: Transcription antitermination protein NusB (153 aa).

It belongs to the NusB family.

Functionally, involved in transcription antitermination. Required for transcription of ribosomal RNA (rRNA) genes. Binds specifically to the boxA antiterminator sequence of the ribosomal RNA (rrn) operons. The sequence is that of Transcription antitermination protein NusB from Clostridium tetani (strain Massachusetts / E88).